The chain runs to 602 residues: Elongation factor 4 (602 aa).

The tr-type G domain maps to 5–187; sequence DHIRNFSIIA…ALVKRIPAPK (183 aa). GTP-binding positions include 17 to 22 and 134 to 137; these read DHGKST and NKID.

The protein belongs to the TRAFAC class translation factor GTPase superfamily. Classic translation factor GTPase family. LepA subfamily.

Its subcellular location is the cell inner membrane. It catalyses the reaction GTP + H2O = GDP + phosphate + H(+). Its function is as follows. Required for accurate and efficient protein synthesis under certain stress conditions. May act as a fidelity factor of the translation reaction, by catalyzing a one-codon backward translocation of tRNAs on improperly translocated ribosomes. Back-translocation proceeds from a post-translocation (POST) complex to a pre-translocation (PRE) complex, thus giving elongation factor G a second chance to translocate the tRNAs correctly. Binds to ribosomes in a GTP-dependent manner. In Zymomonas mobilis subsp. mobilis (strain ATCC 31821 / ZM4 / CP4), this protein is Elongation factor 4.